A 5088-amino-acid polypeptide reads, in one-letter code: Replicase polyprotein 1ab (5088 aa).

Residues 26–46 (VTNVIQYWTPILTMLLLAIYI) traverse the membrane as a helical segment. Residues 301–323 (EIEDDTEAEETQKTKRKGKLQPQ) form a disordered region. 5 helical membrane passes run 343–363 (HLTFGPAYMTMLCLISIMSPT), 1132–1152 (GLFLMLYIAALIIILAIAITI), 1156–1176 (TMMMFLKLITIFAYTFGHLLL), 1201–1221 (YGCLLMLGALAIAVIDLLAYI), and 1250–1270 (ILIPYIFTSYGLVLTIIVSYV). Catalysis depends on for 3C-like proteinase residues H1434 and C1539. The next 2 membrane-spanning stretches (helical) occupy residues 1729–1749 (FTHTHPAFYIAAACVFGLFFV) and 1758–1778 (ILSSIIFAIPHIYVNYYYGLV). The disordered stretch occupies residues 3093 to 3112 (KPNCPMVPSEVPVRNKHKSA). The ExoN domain maps to 4351 to 4616 (MNIVMDDCIC…MTQCIYQSFV (266 aa)). Active-site residues include D4362, E4364, and D4481. C4498, C4504, C4522, and H4525 together coordinate Zn(2+). Active-site residues include H4599, D4604, K4880, D4969, K4998, and E5035. The region spanning 4844–5088 (LNNHAALAKA…RQSVFRYSPK (245 aa)) is the Nidovirus-type SAM-dependent 2'-O-MTase domain.

As to quaternary structure, homodimer. Specific enzymatic cleavages in vivo by its own protease yield mature proteins. 3CL-PRO is autocatalytically processed.

The protein resides in the membrane. The enzyme catalyses a 5'-end (5'-triphosphoguanosine)-ribonucleoside in mRNA + S-adenosyl-L-methionine = a 5'-end (N(7)-methyl 5'-triphosphoguanosine)-ribonucleoside in mRNA + S-adenosyl-L-homocysteine. The catalysed reaction is RNA(n) + a ribonucleoside 5'-triphosphate = RNA(n+1) + diphosphate. It carries out the reaction ATP + H2O = ADP + phosphate + H(+). It catalyses the reaction a 5'-end (N(7)-methyl 5'-triphosphoguanosine)-ribonucleoside in mRNA + S-adenosyl-L-methionine = a 5'-end (N(7)-methyl 5'-triphosphoguanosine)-(2'-O-methyl-ribonucleoside) in mRNA + S-adenosyl-L-homocysteine + H(+). Cysteine protease responsible for the majority of cleavages of the polyprotein. Recognizes substrates containing the core sequence [NT]-[EHKQSY]-|-[AGNST]. In terms of biological role, the helicase which contains a zinc finger structure displays RNA and DNA duplex-unwinding activities with 5' to 3' polarity. Its function is as follows. RNA-directed RNA polymerase that catalyzes the transcription of viral genomic and subgenomic RNAs. Functionally, catalyzes the RNA N7-guanylyltransferase reaction to methylate the core cap structure GpppN-RNA into the type-0 cap (m)GpppN-RNA. The polypeptide is Replicase polyprotein 1ab (Ochlerotatus harrisoni (CAVV)).